Here is a 196-residue protein sequence, read N- to C-terminus: ATP-dependent Clp protease proteolytic subunit (196 aa).

Ser-96 acts as the Nucleophile in catalysis. His-121 is an active-site residue.

This sequence belongs to the peptidase S14 family. Fourteen ClpP subunits assemble into 2 heptameric rings which stack back to back to give a disk-like structure with a central cavity, resembling the structure of eukaryotic proteasomes.

It localises to the cytoplasm. It carries out the reaction Hydrolysis of proteins to small peptides in the presence of ATP and magnesium. alpha-casein is the usual test substrate. In the absence of ATP, only oligopeptides shorter than five residues are hydrolyzed (such as succinyl-Leu-Tyr-|-NHMec, and Leu-Tyr-Leu-|-Tyr-Trp, in which cleavage of the -Tyr-|-Leu- and -Tyr-|-Trp bonds also occurs).. Functionally, cleaves peptides in various proteins in a process that requires ATP hydrolysis. Has a chymotrypsin-like activity. Plays a major role in the degradation of misfolded proteins. In Streptococcus agalactiae serotype III (strain NEM316), this protein is ATP-dependent Clp protease proteolytic subunit.